The chain runs to 478 residues: MMNMITVIGFGSFGRKVVNFIKNKEPITIIDKNIDDADDLVKEGVTVIVGDATQDEVLKKAKIENADIVLILTNEPEVNRRIAERVCELSPNSYKIARAIPRYPELYMGLNIDKIINILESGAKDIAKEVEDAKLKRKLMQLKSVLIEGKKRCMKLEKTEEEKKAPLLILTHINPDPDAIASAMALKTLAERWGVDSDIAYGGNIGYDENKAMINLLGIKLLNVEDIDLDNYCVIAVIDTSTSKQLPIELPNIDIIIDHHNNTDLTAKYMDVRPEVGATASILTQYLMELDIEPSRNLATALFYGIQSDTDYFKRETSKLDFEAAAYLQSYIDASILNMIENPEISTEVMEVLAKAVMNRRVVKGNIALAYVGEISNRDALPKAADFLLKMEGISTTFVFGIVGDEIHISARTKDLRLNLGEILNKAFGGGGHQTAAAAKIPLGIFKAVSDKEALRKLVEEAIRAKILEVIGIKEEEK.

Positions 2–120 (MNMITVIGFG…NIDKIINILE (119 aa)) constitute an RCK N-terminal domain.

This is an uncharacterized protein from Methanocaldococcus jannaschii (strain ATCC 43067 / DSM 2661 / JAL-1 / JCM 10045 / NBRC 100440) (Methanococcus jannaschii).